The chain runs to 1451 residues: Murinoglobulin-2 (1451 aa).

A signal peptide spans 1-27; that stretch reads MWKSRRAQLCLFSVLLAFLPSASSLNG. 3 cysteine pairs are disulfide-bonded: Cys-48–Cys-86, Cys-251–Cys-276, and Cys-269–Cys-288. Asn-55 is a glycosylation site (N-linked (GlcNAc...) asparagine). N-linked (GlcNAc...) asparagine glycans are attached at residues Asn-294, Asn-313, and Asn-500. Cystine bridges form between Cys-461–Cys-555, Cys-587–Cys-773, and Cys-634–Cys-680. The bait region stretch occupies residues 677-734; it reads PKICFDSAPMSGPRGKFDLAFSSEVSGTLQKGSSKRPQPEEPPREDPPPKDPLAETIR. Residues 703–728 form a disordered region; the sequence is GTLQKGSSKRPQPEEPPREDPPPKDP. A compositionally biased stretch (basic and acidic residues) spans 713–728; the sequence is PQPEEPPREDPPPKDP. N-linked (GlcNAc...) asparagine glycans are attached at residues Asn-749, Asn-776, and Asn-871. 4 cysteine pairs are disulfide-bonded: Cys-849/Cys-885, Cys-923/Cys-1274, Cys-1081/Cys-1104, and Cys-1298/Cys-1444. Residues 974–977 constitute a cross-link (isoglutamyl cysteine thioester (Cys-Gln)); it reads CGEQ. Residue Asn-1401 is glycosylated (N-linked (GlcNAc...) asparagine).

The protein belongs to the protease inhibitor I39 (alpha-2-macroglobulin) family. As to quaternary structure, monomer. In terms of tissue distribution, plasma.

Its subcellular location is the secreted. A proteinase activates the inhibitor by specific proteolysis in the bait region, which, by an unknown mechanism leads to reaction at the cysteinyl-glutamyl internal thiol ester site and to a conformational change, whereby the proteinase is trapped and/or covalently bound to the inhibitor. While in the tetrameric proteinase inhibitors steric inhibition is sufficiently strong, monomeric forms need a covalent linkage between the activated glutamyl residue of the original thiol ester and a terminal amino group of a lysine or another nucleophilic group on the proteinase, for inhibition to be effective. This Mus musculus (Mouse) protein is Murinoglobulin-2 (Mug2).